The sequence spans 284 residues: 2-dehydro-3-deoxyphosphooctonate aldolase (284 aa).

Belongs to the KdsA family.

It is found in the cytoplasm. The enzyme catalyses D-arabinose 5-phosphate + phosphoenolpyruvate + H2O = 3-deoxy-alpha-D-manno-2-octulosonate-8-phosphate + phosphate. It participates in carbohydrate biosynthesis; 3-deoxy-D-manno-octulosonate biosynthesis; 3-deoxy-D-manno-octulosonate from D-ribulose 5-phosphate: step 2/3. It functions in the pathway bacterial outer membrane biogenesis; lipopolysaccharide biosynthesis. This Burkholderia multivorans (strain ATCC 17616 / 249) protein is 2-dehydro-3-deoxyphosphooctonate aldolase.